The primary structure comprises 332 residues: Adenosine receptor A2b (332 aa).

At 1–8 (MQLETQDA) the chain is on the extracellular side. Residues 9–33 (LYVALELVIAALAVAGNVLVCAAVG) form a helical membrane-spanning segment. Residues 34–43 (ASSALQTPTN) lie on the Cytoplasmic side of the membrane. A helical transmembrane segment spans residues 44–67 (YFLVSLATADVAVGLFAIPFAITI). The Extracellular segment spans residues 68–78 (SLGFCTDFHGC). An intrachain disulfide couples Cys78 to Cys171. The chain crosses the membrane as a helical span at residues 79 to 101 (LFLACFVLVLTQSSIFSLLAVAV). The Cytoplasmic segment spans residues 102–121 (DRYLAIRVPLRYKGLVTGTR). Residues 122 to 144 (ARGIIAVLWVLAFGIGLTPFLGW) form a helical membrane-spanning segment. Topologically, residues 145–178 (NSKDSATSNCTELGDGIANKSCCPVTCLFENVVP) are extracellular. Residues Asn153 and Asn163 are each glycosylated (N-linked (GlcNAc...) asparagine). Position 174 (Glu174) interacts with adenosine. The chain crosses the membrane as a helical span at residues 179–203 (MSYMVYFNFFGCVLPPLLIMLVIYI). The Cytoplasmic segment spans residues 204–235 (KIFMVACKQLQRMELMDHSRTTLQREIHAAKS). Residues 236–259 (LAMIVGIFALCWLPVHAINCITLF) form a helical membrane-spanning segment. Asn254 is an adenosine binding site. The Extracellular segment spans residues 260-267 (HPALAKDK). A helical transmembrane segment spans residues 268–291 (PKWVMNVAILLSHANSVVNPIVYA). Positions 279 and 280 each coordinate adenosine. Over 292 to 332 (YRNRDFRYSFHKIISRYVLCQAETKGGSGQAGAQSTLSLGL) the chain is Cytoplasmic. Cys311 carries the S-palmitoyl cysteine lipid modification.

Belongs to the G-protein coupled receptor 1 family.

It is found in the cell membrane. In terms of biological role, receptor for adenosine. The activity of this receptor is mediated by G proteins which activate adenylyl cyclase. This Mus musculus (Mouse) protein is Adenosine receptor A2b (Adora2b).